The sequence spans 502 residues: Cytochrome P450 3A5 (502 aa).

C441 contacts heme.

It belongs to the cytochrome P450 family. Heme serves as cofactor.

It is found in the endoplasmic reticulum membrane. The protein localises to the microsome membrane. The catalysed reaction is an organic molecule + reduced [NADPH--hemoprotein reductase] + O2 = an alcohol + oxidized [NADPH--hemoprotein reductase] + H2O + H(+). It carries out the reaction 17beta-estradiol + reduced [NADPH--hemoprotein reductase] + O2 = 2-hydroxy-17beta-estradiol + oxidized [NADPH--hemoprotein reductase] + H2O + H(+). The enzyme catalyses 17beta-estradiol + reduced [NADPH--hemoprotein reductase] + O2 = 4-hydroxy-17beta-estradiol + oxidized [NADPH--hemoprotein reductase] + H2O + H(+). It catalyses the reaction estrone + reduced [NADPH--hemoprotein reductase] + O2 = 2-hydroxyestrone + oxidized [NADPH--hemoprotein reductase] + H2O + H(+). The catalysed reaction is estrone + reduced [NADPH--hemoprotein reductase] + O2 = 4-hydroxyestrone + oxidized [NADPH--hemoprotein reductase] + H2O + H(+). It carries out the reaction testosterone + reduced [NADPH--hemoprotein reductase] + O2 = 6beta,17beta-dihydroxyandrost-4-en-3-one + oxidized [NADPH--hemoprotein reductase] + H2O + H(+). The enzyme catalyses androst-4-ene-3,17-dione + reduced [NADPH--hemoprotein reductase] + O2 = 6beta-hydroxyandrost-4-ene-3,17-dione + oxidized [NADPH--hemoprotein reductase] + H2O + H(+). It catalyses the reaction progesterone + reduced [NADPH--hemoprotein reductase] + O2 = 6beta-hydroxyprogesterone + oxidized [NADPH--hemoprotein reductase] + H2O + H(+). The catalysed reaction is all-trans-retinol + reduced [NADPH--hemoprotein reductase] + O2 = all-trans-retinal + oxidized [NADPH--hemoprotein reductase] + 2 H2O + H(+). It carries out the reaction all-trans-retinoate + reduced [NADPH--hemoprotein reductase] + O2 = all-trans-4-hydroxyretinoate + oxidized [NADPH--hemoprotein reductase] + H2O + H(+). The protein operates within steroid hormone biosynthesis. It participates in cofactor metabolism; retinol metabolism. Functionally, a cytochrome P450 monooxygenase involved in the metabolism of steroid hormones and vitamins. Mechanistically, uses molecular oxygen inserting one oxygen atom into a substrate, and reducing the second into a water molecule, with two electrons provided by NADPH via cytochrome P450 reductase (NADPH--hemoprotein reductase). Catalyzes the hydroxylation of carbon-hydrogen bonds. Exhibits high catalytic activity for the formation of catechol estrogens from 17beta-estradiol (E2) and estrone (E1), namely 2-hydroxy E1 and E2. Catalyzes 6beta-hydroxylation of the steroid hormones testosterone, progesterone, and androstenedione. Catalyzes the oxidative conversion of all-trans-retinol to all-trans-retinal, a rate-limiting step for the biosynthesis of all-trans-retinoic acid (atRA). Further metabolizes all trans-retinoic acid (atRA) to 4-hydroxyretinoate and may play a role in hepatic atRA clearance. Also involved in the oxidative metabolism of xenobiotics, including calcium channel blocking drug nifedipine and immunosuppressive drug cyclosporine. In Homo sapiens (Human), this protein is Cytochrome P450 3A5.